The primary structure comprises 306 residues: Ectoine dioxygenase (306 aa).

Residue Gln-127 coordinates L-ectoine. Lys-133 provides a ligand contact to 2-oxoglutarate. Residues His-144, Asp-146, and His-245 each contribute to the Fe cation site.

This sequence belongs to the PhyH family. EctD subfamily. As to quaternary structure, homodimer. Requires Fe(2+) as cofactor.

The catalysed reaction is L-ectoine + 2-oxoglutarate + O2 = 5-hydroxyectoine + succinate + CO2. Functionally, involved in the biosynthesis of 5-hydroxyectoine, called compatible solute, which helps organisms to survive extreme osmotic stress by acting as a highly soluble organic osmolyte. Catalyzes the 2-oxoglutarate-dependent selective hydroxylation of L-ectoine to yield (4S,5S)-5-hydroxyectoine. This chain is Ectoine dioxygenase, found in Sphingopyxis alaskensis (strain DSM 13593 / LMG 18877 / RB2256) (Sphingomonas alaskensis).